A 672-amino-acid chain; its full sequence is UvrABC system protein B (672 aa).

The 158-residue stretch at 26-183 folds into the Helicase ATP-binding domain; that stretch reads EGLEDGLAHQ…RRLSELQYVR (158 aa). 39 to 46 contacts ATP; sequence GVTGSGKT. The Beta-hairpin signature appears at 92 to 115; the sequence is YYDYYQPEAYVPSSDTFIEKDASV. The region spanning 431-597 is the Helicase C-terminal domain; the sequence is QVDDLLSEIN…ALNKKVTDIL (167 aa). A disordered region spans residues 601–623; it reads DGPVRSRTKGARGQRAAEPHPDY. Positions 632–667 constitute a UVR domain; it reads EQQIQRLETQMYQHAQNLEFEQAAALRDEIHILREQ.

Belongs to the UvrB family. As to quaternary structure, forms a heterotetramer with UvrA during the search for lesions. Interacts with UvrC in an incision complex.

It localises to the cytoplasm. In terms of biological role, the UvrABC repair system catalyzes the recognition and processing of DNA lesions. A damage recognition complex composed of 2 UvrA and 2 UvrB subunits scans DNA for abnormalities. Upon binding of the UvrA(2)B(2) complex to a putative damaged site, the DNA wraps around one UvrB monomer. DNA wrap is dependent on ATP binding by UvrB and probably causes local melting of the DNA helix, facilitating insertion of UvrB beta-hairpin between the DNA strands. Then UvrB probes one DNA strand for the presence of a lesion. If a lesion is found the UvrA subunits dissociate and the UvrB-DNA preincision complex is formed. This complex is subsequently bound by UvrC and the second UvrB is released. If no lesion is found, the DNA wraps around the other UvrB subunit that will check the other stand for damage. The chain is UvrABC system protein B from Edwardsiella ictaluri (strain 93-146).